A 461-amino-acid chain; its full sequence is Argininosuccinate lyase (461 aa).

Belongs to the lyase 1 family. Argininosuccinate lyase subfamily.

It localises to the cytoplasm. The enzyme catalyses 2-(N(omega)-L-arginino)succinate = fumarate + L-arginine. It functions in the pathway amino-acid biosynthesis; L-arginine biosynthesis; L-arginine from L-ornithine and carbamoyl phosphate: step 3/3. This is Argininosuccinate lyase from Aeromonas hydrophila subsp. hydrophila (strain ATCC 7966 / DSM 30187 / BCRC 13018 / CCUG 14551 / JCM 1027 / KCTC 2358 / NCIMB 9240 / NCTC 8049).